The chain runs to 458 residues: MAGSPSRAAGRRLQLPLLCLFLQGATAVLFAVFVRYNHKTDAALWHRGNYSNADNEFYFRYPSFQDVHAMVFVGFGFLMVFLQRYGFSSVGFTFLLAAFALQWSTLVQGFLHSFHSGHIHVGVESMINADFCAGAVLISFGAVLGKTGPAQLLLMALLEVVLFGINEFVLLHLLGVRDAGGSMTIHTFGAYFGLVLSRVLYRPQLEKSKHRQGSVYHSDLFAMIGTIFLWIFWPSFNSALTALGAGQHRTALNTYYSLAASTLGTFALSALVGEDGRLDMVHIQNAALAGGVVVGTSSEMMLTPFGALAAGFLAGTVSTLGYKFFTPILESKFKVQDTCGVHNLHGMPGVLGALLGVLVAGLATHEAYGDGLESVFPLIAEGQRSATSQAMLQLFGLFVTLMFASVGGGLGGLLLKLPFLDSPPDSQCYEDQVHWQVPGEHEDEAQRPLRVEEADTQA.

At methionine 1–leucine 13 the chain is on the cytoplasmic side. Residues glutamine 14–valine 34 traverse the membrane as a helical segment. At arginine 35–tyrosine 61 the chain is on the extracellular side. Asparagine 49 carries an N-linked (GlcNAc...) asparagine glycan. A helical transmembrane segment spans residues proline 62–leucine 82. The Cytoplasmic portion of the chain corresponds to glutamine 83–glycine 86. The helical transmembrane segment at phenylalanine 87–valine 107 threads the bilayer. Over glutamine 108 to glutamate 124 the chain is Extracellular. Residues serine 125–glycine 145 traverse the membrane as a helical segment. The Cytoplasmic segment spans residues lysine 146–proline 149. Residues alanine 150 to leucine 170 form a helical membrane-spanning segment. Over leucine 171 to aspartate 178 the chain is Extracellular. A helical membrane pass occupies residues alanine 179 to tyrosine 201. The Cytoplasmic segment spans residues arginine 202–aspartate 219. Residues leucine 220–leucine 240 traverse the membrane as a helical segment. At threonine 241–alanine 251 the chain is on the extracellular side. Residues leucine 252 to valine 272 form a helical membrane-spanning segment. The Cytoplasmic portion of the chain corresponds to glycine 273–histidine 282. The helical transmembrane segment at isoleucine 283–threonine 303 threads the bilayer. Position 304 (proline 304) is a topological domain, extracellular. Residues phenylalanine 305–phenylalanine 325 traverse the membrane as a helical segment. At threonine 326–glycine 346 the chain is on the cytoplasmic side. Residues methionine 347–alanine 367 traverse the membrane as a helical segment. At tyrosine 368–glutamine 393 the chain is on the extracellular side. The chain crosses the membrane as a helical span at residues leucine 394–leucine 414. Topologically, residues leucine 415 to alanine 458 are cytoplasmic. The segment at lysine 416–proline 424 is interaction with ANK3. Positions tyrosine 429–glutamine 432 match the Basolateral sorting signal motif. The segment at glycine 439–alanine 458 is disordered. Residues glutamate 444–alanine 458 are compositionally biased toward basic and acidic residues.

This sequence belongs to the ammonium transporter (TC 2.A.49) family. Rh subfamily. Interacts (via C-terminus) with ANK2 and ANK3; required for targeting to the basolateral membrane. N-glycosylated.

The protein resides in the cell membrane. It is found in the basolateral cell membrane. It catalyses the reaction NH4(+)(in) = NH4(+)(out). The enzyme catalyses methylamine(out) = methylamine(in). It carries out the reaction CO2(out) = CO2(in). Ammonium transporter involved in the maintenance of acid-base homeostasis. Transports ammonium and its related derivative methylammonium across the basolateral plasma membrane of epithelial cells likely contributing to renal transepithelial ammonia transport and ammonia metabolism. May transport either NH4(+) or NH3 ammonia species predominantly mediating an electrogenic NH4(+) transport. May act as a CO2 channel providing for renal acid secretion. The chain is Ammonium transporter Rh type B (RHBG) from Papio hamadryas (Hamadryas baboon).